Here is a 172-residue protein sequence, read N- to C-terminus: Shikimate kinase (172 aa).

8 to 15 (GARASGKT) contributes to the ATP binding site.

This sequence belongs to the shikimate kinase family.

It localises to the cytoplasm. It carries out the reaction shikimate + ATP = 3-phosphoshikimate + ADP + H(+). It functions in the pathway metabolic intermediate biosynthesis; chorismate biosynthesis; chorismate from D-erythrose 4-phosphate and phosphoenolpyruvate: step 5/7. The chain is Shikimate kinase from Oleidesulfovibrio alaskensis (strain ATCC BAA-1058 / DSM 17464 / G20) (Desulfovibrio alaskensis).